The primary structure comprises 173 residues: RNA pyrophosphohydrolase (173 aa).

The region spanning 11–164 (PYRRCVGVVV…KKHVYRKVVS (154 aa)) is the Nudix hydrolase domain. The Nudix box signature appears at 52 to 73 (GGIDEGEEPLDAACRELYEETG).

Belongs to the Nudix hydrolase family. RppH subfamily. A divalent metal cation serves as cofactor.

In terms of biological role, accelerates the degradation of transcripts by removing pyrophosphate from the 5'-end of triphosphorylated RNA, leading to a more labile monophosphorylated state that can stimulate subsequent ribonuclease cleavage. The protein is RNA pyrophosphohydrolase of Bartonella quintana (strain Toulouse) (Rochalimaea quintana).